We begin with the raw amino-acid sequence, 130 residues long: uncharacterized protein (130 aa).

The chain crosses the membrane as a helical span at residues 8-28 (PFILMIIVLGLFLVSIGGYYY).

It is found in the membrane. This is an uncharacterized protein from Bacillus anthracis.